The sequence spans 341 residues: Phosphate acyltransferase (341 aa).

This sequence belongs to the PlsX family. As to quaternary structure, homodimer. Probably interacts with PlsY.

It localises to the cytoplasm. It carries out the reaction a fatty acyl-[ACP] + phosphate = an acyl phosphate + holo-[ACP]. The protein operates within lipid metabolism; phospholipid metabolism. Its function is as follows. Catalyzes the reversible formation of acyl-phosphate (acyl-PO(4)) from acyl-[acyl-carrier-protein] (acyl-ACP). This enzyme utilizes acyl-ACP as fatty acyl donor, but not acyl-CoA. In Idiomarina loihiensis (strain ATCC BAA-735 / DSM 15497 / L2-TR), this protein is Phosphate acyltransferase.